A 355-amino-acid chain; its full sequence is Alpha-N-acetylneuraminide alpha-2,8-sialyltransferase (355 aa).

Over 1–28 (MSPCGRALHTSRGAMAMLARKFPRTRLP) the chain is Cytoplasmic. A helical; Signal-anchor for type II membrane protein membrane pass occupies residues 29-47 (VGASALCVVVLCWLYIFPV). Residues 48–355 (YRLPNEKEIV…CEEPSPQPTS (308 aa)) lie on the Lumenal side of the membrane. N-linked (GlcNAc...) asparagine glycans are attached at residues Asn-70 and Asn-118. 2 cysteine pairs are disulfide-bonded: Cys-137–Cys-286 and Cys-151–Cys-346. Positions 142 and 165 each coordinate CMP-N-acetyl-beta-neuraminate. N-linked (GlcNAc...) asparagine glycosylation is found at Asn-213 and Asn-244. Residues Ser-273, Thr-274, Gly-275, Trp-295, and His-309 each contribute to the CMP-N-acetyl-beta-neuraminate site. His-321 functions as the Proton donor/acceptor in the catalytic mechanism.

Belongs to the glycosyltransferase 29 family.

The protein localises to the golgi apparatus membrane. The enzyme catalyses an N-acetyl-alpha-neuraminyl-(2-&gt;3)-beta-D-galactosyl derivative + CMP-N-acetyl-beta-neuraminate = an N-acetyl-alpha-neuraminyl-(2-&gt;8)-N-acetyl-alpha-neuraminyl-(2-&gt;3)-beta-D-galactosyl derivative + CMP + H(+). The catalysed reaction is a ganglioside GM3 (d18:1(4E)) + CMP-N-acetyl-beta-neuraminate = a ganglioside GD3 (d18:1(4E)) + CMP + H(+). It carries out the reaction a ganglioside GD3 (d18:1(4E)) + CMP-N-acetyl-beta-neuraminate = a ganglioside GT3 (d18:1(4E)) + CMP + H(+). It catalyses the reaction a ganglioside GD1a (d18:1(4E)) + CMP-N-acetyl-beta-neuraminate = a ganglioside GT1a (d18:1(4E)) + CMP + H(+). The enzyme catalyses a ganglioside GT1b (d18:1(4E)) + CMP-N-acetyl-beta-neuraminate = a ganglioside GQ1b (d18:1(4E)) + CMP + H(+). The catalysed reaction is a ganglioside GM1b (d18:1(4E)) + CMP-N-acetyl-beta-neuraminate = a ganglioside GD1c (d18:1(4E)) + CMP + H(+). It carries out the reaction a ganglioside GD3 + CMP-N-acetyl-beta-neuraminate = a ganglioside GT3 + CMP + H(+). It catalyses the reaction [alpha-N-acetylneuraminyl-(2-&gt;8)](n)-alpha-N-acetylneuraminyl-(2-&gt;8)-alpha-N-acetylneuraminyl-(2-&gt;3)-beta-D-galactosyl-(1-&gt;4)-beta-D-glucosyl-(1&lt;-&gt;1)-ceramide + CMP-N-acetyl-beta-neuraminate = [alpha-N-acetylneuraminyl-(2-&gt;8)](n+1)-alpha-N-acetylneuraminyl-(2-&gt;8)-alpha-N-acetylneuraminyl-(2-&gt;3)-beta-D-galactosyl-(1-&gt;4)-beta-D-glucosyl-(1&lt;-&gt;1)-ceramide + CMP + H(+). Its pathway is protein modification; protein glycosylation. The protein operates within lipid metabolism; sphingolipid metabolism. In terms of biological role, catalyzes the addition of sialic acid in alpha 2,8-linkage to the sialic acid moiety of the ganglioside GM3 to form ganglioside GD3; gangliosides are a subfamily of complex glycosphingolipds that contain one or more residues of sialic acid. Can catalyze the addition of a second alpha-2,8- sialic acid to GD3 to form GT3. Can use GM1b, GD1a and GT1b as acceptor substrates to synthesize GD1c, GT1a and GQ1b respectively. The polypeptide is Alpha-N-acetylneuraminide alpha-2,8-sialyltransferase (Mus musculus (Mouse)).